Consider the following 257-residue polypeptide: S-methyl-5'-thioadenosine phosphorylase (257 aa).

Phosphate-binding positions include Ser10, 50–51 (RH), and 83–84 (TA). Position 180 (Met180) interacts with substrate. A phosphate-binding site is contributed by Thr181. 204–206 (DYD) lines the substrate pocket.

It belongs to the PNP/MTAP phosphorylase family. MTAP subfamily. As to quaternary structure, homohexamer. Dimer of a homotrimer.

The catalysed reaction is S-methyl-5'-thioadenosine + phosphate = 5-(methylsulfanyl)-alpha-D-ribose 1-phosphate + adenine. It catalyses the reaction adenosine + phosphate = alpha-D-ribose 1-phosphate + adenine. The protein operates within amino-acid biosynthesis; L-methionine biosynthesis via salvage pathway; S-methyl-5-thio-alpha-D-ribose 1-phosphate from S-methyl-5'-thioadenosine (phosphorylase route): step 1/1. In terms of biological role, catalyzes the reversible phosphorylation of S-methyl-5'-thioadenosine (MTA) to adenine and 5-methylthioribose-1-phosphate. Involved in the breakdown of MTA, a major by-product of polyamine biosynthesis. Responsible for the first step in the methionine salvage pathway after MTA has been generated from S-adenosylmethionine. Has broad substrate specificity with 6-aminopurine nucleosides as preferred substrates. Can also use adenosine as substrate to form ribose 1-phosphate. This chain is S-methyl-5'-thioadenosine phosphorylase, found in Thermococcus kodakarensis (strain ATCC BAA-918 / JCM 12380 / KOD1) (Pyrococcus kodakaraensis (strain KOD1)).